The primary structure comprises 739 residues: Phosphoribosylformylglycinamidine synthase subunit PurL (739 aa).

Histidine 52 is an active-site residue. ATP-binding residues include tyrosine 55 and lysine 94. Glutamate 96 provides a ligand contact to Mg(2+). Substrate-binding positions include 97 to 100 (SHNH) and arginine 119. Histidine 98 functions as the Proton acceptor in the catalytic mechanism. Aspartate 120 is a binding site for Mg(2+). Glutamine 243 provides a ligand contact to substrate. Aspartate 273 provides a ligand contact to Mg(2+). 317–319 (ESQ) contacts substrate. 2 residues coordinate ATP: aspartate 500 and glycine 537. A Mg(2+)-binding site is contributed by asparagine 538. Residue serine 540 participates in substrate binding.

The protein belongs to the FGAMS family. Monomer. Part of the FGAM synthase complex composed of 1 PurL, 1 PurQ and 2 PurS subunits.

It localises to the cytoplasm. The enzyme catalyses N(2)-formyl-N(1)-(5-phospho-beta-D-ribosyl)glycinamide + L-glutamine + ATP + H2O = 2-formamido-N(1)-(5-O-phospho-beta-D-ribosyl)acetamidine + L-glutamate + ADP + phosphate + H(+). The protein operates within purine metabolism; IMP biosynthesis via de novo pathway; 5-amino-1-(5-phospho-D-ribosyl)imidazole from N(2)-formyl-N(1)-(5-phospho-D-ribosyl)glycinamide: step 1/2. In terms of biological role, part of the phosphoribosylformylglycinamidine synthase complex involved in the purines biosynthetic pathway. Catalyzes the ATP-dependent conversion of formylglycinamide ribonucleotide (FGAR) and glutamine to yield formylglycinamidine ribonucleotide (FGAM) and glutamate. The FGAM synthase complex is composed of three subunits. PurQ produces an ammonia molecule by converting glutamine to glutamate. PurL transfers the ammonia molecule to FGAR to form FGAM in an ATP-dependent manner. PurS interacts with PurQ and PurL and is thought to assist in the transfer of the ammonia molecule from PurQ to PurL. This chain is Phosphoribosylformylglycinamidine synthase subunit PurL, found in Enterococcus faecalis (strain ATCC 700802 / V583).